A 342-amino-acid polypeptide reads, in one-letter code: N-acetyl-gamma-glutamyl-phosphate reductase (342 aa).

The active site involves Cys149.

This sequence belongs to the NAGSA dehydrogenase family. Type 1 subfamily.

It is found in the cytoplasm. The catalysed reaction is N-acetyl-L-glutamate 5-semialdehyde + phosphate + NADP(+) = N-acetyl-L-glutamyl 5-phosphate + NADPH + H(+). It participates in amino-acid biosynthesis; L-arginine biosynthesis; N(2)-acetyl-L-ornithine from L-glutamate: step 3/4. Its function is as follows. Catalyzes the NADPH-dependent reduction of N-acetyl-5-glutamyl phosphate to yield N-acetyl-L-glutamate 5-semialdehyde. This Nitrosomonas eutropha (strain DSM 101675 / C91 / Nm57) protein is N-acetyl-gamma-glutamyl-phosphate reductase.